A 345-amino-acid polypeptide reads, in one-letter code: Fe(3+) ions import ATP-binding protein FbpC (345 aa).

One can recognise an ABC transporter domain in the interval 4–236; that stretch reads LELHGIGKSY…PVDEPTASFL (233 aa). Residue 36–43 participates in ATP binding; sequence GPSGSGKT.

The protein belongs to the ABC transporter superfamily. Fe(3+) ion importer (TC 3.A.1.10) family. The complex is composed of two ATP-binding proteins (FbpC), two transmembrane proteins (FbpB) and a solute-binding protein (FbpA).

Its subcellular location is the cell inner membrane. The catalysed reaction is Fe(3+)(out) + ATP + H2O = Fe(3+)(in) + ADP + phosphate + H(+). In terms of biological role, part of the ABC transporter complex FbpABC involved in Fe(3+) ions import. Responsible for energy coupling to the transport system. This Serratia marcescens protein is Fe(3+) ions import ATP-binding protein FbpC.